The primary structure comprises 386 residues: Heat-inducible transcription repressor HrcA (386 aa).

This sequence belongs to the HrcA family.

Functionally, negative regulator of class I heat shock genes (grpE-dnaK-dnaJ and groELS operons). Prevents heat-shock induction of these operons. This Chlamydia abortus (strain DSM 27085 / S26/3) (Chlamydophila abortus) protein is Heat-inducible transcription repressor HrcA.